We begin with the raw amino-acid sequence, 157 residues long: MANKNEPKITVAAENRKARFNYAIEDTIEAGIALTGTEVKSVRGGKSTIAESYADSRDGEIWLINANIPEYLQANRFNHEPKRPRKLLLHRKQINKLMGAVEREGMTLIPLKLYFNERGRAKLLLAVAKGKKLHDKRESEKKRDWGREKGRLLRARG.

Residues 133–157 (LHDKRESEKKRDWGREKGRLLRARG) are disordered. The segment covering 135–151 (DKRESEKKRDWGREKGR) has biased composition (basic and acidic residues).

Belongs to the SmpB family.

The protein localises to the cytoplasm. Its function is as follows. Required for rescue of stalled ribosomes mediated by trans-translation. Binds to transfer-messenger RNA (tmRNA), required for stable association of tmRNA with ribosomes. tmRNA and SmpB together mimic tRNA shape, replacing the anticodon stem-loop with SmpB. tmRNA is encoded by the ssrA gene; the 2 termini fold to resemble tRNA(Ala) and it encodes a 'tag peptide', a short internal open reading frame. During trans-translation Ala-aminoacylated tmRNA acts like a tRNA, entering the A-site of stalled ribosomes, displacing the stalled mRNA. The ribosome then switches to translate the ORF on the tmRNA; the nascent peptide is terminated with the 'tag peptide' encoded by the tmRNA and targeted for degradation. The ribosome is freed to recommence translation, which seems to be the essential function of trans-translation. This chain is SsrA-binding protein, found in Bradyrhizobium sp. (strain ORS 278).